Reading from the N-terminus, the 407-residue chain is Argininosuccinate synthase (407 aa).

ATP is bound by residues 16 to 24 (AYSGGLDTS) and Ala-44. Residues Tyr-96 and Ser-101 each coordinate L-citrulline. Residue Gly-126 coordinates ATP. Positions 128, 132, and 133 each coordinate L-aspartate. An L-citrulline-binding site is contributed by Asn-132. The L-citrulline site is built by Arg-136, Ser-185, Ser-194, Glu-270, and Tyr-282.

This sequence belongs to the argininosuccinate synthase family. Type 1 subfamily. Homotetramer.

The protein resides in the cytoplasm. It carries out the reaction L-citrulline + L-aspartate + ATP = 2-(N(omega)-L-arginino)succinate + AMP + diphosphate + H(+). It participates in amino-acid biosynthesis; L-arginine biosynthesis; L-arginine from L-ornithine and carbamoyl phosphate: step 2/3. The polypeptide is Argininosuccinate synthase (Shewanella sp. (strain ANA-3)).